We begin with the raw amino-acid sequence, 123 residues long: Large ribosomal subunit protein bL12 (123 aa).

It belongs to the bacterial ribosomal protein bL12 family. In terms of assembly, homodimer. Part of the ribosomal stalk of the 50S ribosomal subunit. Forms a multimeric L10(L12)X complex, where L10 forms an elongated spine to which 2 to 4 L12 dimers bind in a sequential fashion. Binds GTP-bound translation factors.

Functionally, forms part of the ribosomal stalk which helps the ribosome interact with GTP-bound translation factors. Is thus essential for accurate translation. In Borrelia turicatae (strain 91E135), this protein is Large ribosomal subunit protein bL12.